An 80-amino-acid chain; its full sequence is Conotoxin SIVB (80 aa).

Positions 1–21 (MGMRMMFTVFLSVVLATTVVS) are cleaved as a signal peptide. Positions 22–38 (TPSDRASDGRNAAVHER) are excised as a propeptide. Gln39 carries the pyrrolidone carboxylic acid modification. Ser45 carries O-linked (HexNAc...) serine glycosylation. A 4-hydroxyproline mark is found at Pro55, Pro60, Pro61, Pro69, Pro72, and Pro75. Position 75 is a proline amide (Pro75). Positions 76 to 80 (GRRND) are excised as a propeptide.

Belongs to the conotoxin A superfamily. Contains 3 disulfide bonds. In terms of processing, O-linked glycan consists of Hex3-HexNAc2 pentasaccharide. In terms of tissue distribution, expressed by the venom duct.

It localises to the secreted. Functionally, neurotoxin with probable activity on sodium channel. Induces intense repetitive firing of the frog neuromuscular junction, leading to a tetanic contracture in muscle fiber (spastic paralysis). In vivo, shows the same effect as the whole venom when injected on fish prey. This Conus striatus (Striated cone) protein is Conotoxin SIVB.